We begin with the raw amino-acid sequence, 420 residues long: MLSSFPVVLLETMSHYTDEPRFTIEQIDLLQRLRRTGMTKHEILHALETLDRLDQEHSDKFGRRSSYGGSSYGNSTNNVPASSSTATASTQTQHSGMSPSPSNSYDTSPQPCTTNQNGRENNERLSTSNGKMSPTRYHANSMGQRSYSFEASEEDLDVDDKVEELMRRDSSVIKEEIKAFLANRRISQAVVAQVTGISQSRISHWLLQQGSDLSEQKKRAFYRWYQLEKTNPGATLSMRPAPIPIEDPEWRQTPPPVSATSGTFRLRRGSRFTWRKECLAVMESYFNENQYPDEAKREEIANACNAVIQKPGKKLSDLERVTSLKVYNWFANRRKEIKRRANIEAAILESHGIDVQSPGGHSNSDDVDGNDYSEQDDSTSHSDHQDPISLAVEMAAVNHTILALARQGANEIKTEALDDD.

The 32-residue stretch at 18–49 (DEPRFTIEQIDLLQRLRRTGMTKHEILHALET) folds into the HNF-p1 domain. A disordered region spans residues 56-139 (EHSDKFGRRS…GKMSPTRYHA (84 aa)). Residue Lys60 forms a Glycyl lysine isopeptide (Lys-Gly) (interchain with G-Cter in SUMO2) linkage. 2 stretches are compositionally biased toward low complexity: residues 64 to 73 (RSSYGGSSYG) and 81 to 93 (ASSS…TQTQ). Residues 94–132 (HSGMSPSPSNSYDTSPQPCTTNQNGRENNERLSTSNGKM) show a composition bias toward polar residues. Residue Lys131 forms a Glycyl lysine isopeptide (Lys-Gly) (interchain with G-Cter in SUMO2) linkage. The region spanning 145 to 241 (RSYSFEASEE…PGATLSMRPA (97 aa)) is the POU-specific atypical domain. A Phosphoserine modification is found at Ser148. Lys161 participates in a covalent cross-link: Glycyl lysine isopeptide (Lys-Gly) (interchain with G-Cter in SUMO2). Ser170 carries the post-translational modification Phosphoserine. Residues Lys174, Lys217, and Lys310 each participate in a glycyl lysine isopeptide (Lys-Gly) (interchain with G-Cter in SUMO2) cross-link. The segment at residues 267 to 341 (RRGSRFTWRK…NRRKEIKRRA (75 aa)) is a DNA-binding region (homeobox). Residues 353–385 (IDVQSPGGHSNSDDVDGNDYSEQDDSTSHSDHQ) are disordered. Over residues 365 to 377 (DDVDGNDYSEQDD) the composition is skewed to acidic residues. Lys413 is covalently cross-linked (Glycyl lysine isopeptide (Lys-Gly) (interchain with G-Cter in SUMO1); alternate). Lys413 is covalently cross-linked (Glycyl lysine isopeptide (Lys-Gly) (interchain with G-Cter in SUMO2); alternate).

In terms of assembly, associates with the telomerase holoenzyme complex. Interacts with DKC1, XRCC6 and COIL. Ubiquitous. Detected in pancreas, brain, spleen, placenta, prostate, thymus, liver, heart, bone marrow, skeletal muscle, stomach, uterus, testis, kidney, ovary, colon, lung, cardiac muscle and thyroid gland.

The protein localises to the nucleus. The protein resides in the cytoplasm. It is found in the chromosome. Its subcellular location is the telomere. It localises to the cajal body. The protein localises to the PML body. Binds directly to 5'-TTAGGG-3' repeats in telomeric DNA. Associates with the telomerase complex at sites of active telomere processing and positively regulates telomere elongation. Important for TERT binding to chromatin, indicating a role in recruitment of the telomerase complex to telomeres. Also plays a role in the alternative lengthening of telomeres (ALT) pathway in telomerase-negative cells where it promotes formation and/or maintenance of ALT-associated promyelocytic leukemia bodies (APBs). Enhances formation of telomere C-circles in ALT cells, suggesting a possible role in telomere recombination. Might also be involved in the DNA damage response at telomeres. The protein is Homeobox-containing protein 1 of Homo sapiens (Human).